Reading from the N-terminus, the 244-residue chain is Putative membrane peptidase YdiL (244 aa).

The next 6 membrane-spanning stretches (helical) occupy residues 7–27 (FIIL…PLLF), 44–64 (AQGL…LLIL), 80–100 (IGLS…SQGI), 127–147 (AVPL…EIIF), 159–179 (TNFF…HADL), and 202–222 (IWVP…MQLE). Active-site proton donor/acceptor residues include Glu-143 and His-176.

Belongs to the peptidase U48 family.

The protein resides in the cell membrane. In terms of biological role, may function as endopeptidase which proteolytically removes the C-terminal three residues of farnesylated peptides containing the CAAX motif where C is cysteine, A is an aliphatic amino acid and X is any amino acid. This chain is Putative membrane peptidase YdiL (ydiL), found in Bacillus subtilis (strain 168).